A 1755-amino-acid chain; its full sequence is Periplakin (1755 aa).

Residues 1 to 11 (MHSLFRKRNKG) are compositionally biased toward basic residues. Residues 1-20 (MHSLFRKRNKGKYSPTVQTR) form a disordered region. At serine 14 the chain carries Phosphoserine. Coiled coils occupy residues 16-125 (TVQT…KQMY) and 182-387 (LAKD…QQVV). Spectrin repeat units follow at residues 214–315 (QDYM…SHLK), 321–483 (HQFH…HALQ), and 503–610 (RQLL…EKVD). The SH3 domain maps to 397–453 (LKPIPVEALCDFESDQGLISRGYSYTLQKNNGESWELTDSTGKKLAAPAVCFIIPPT). A Phosphoserine modification is found at serine 463. Coiled coils occupy residues 611–819 (VANR…RNSH) and 883–1644 (LSSG…SVAV). Phosphoserine is present on residues serine 885, serine 947, serine 1583, and serine 1656. Residues 1556–1755 (ELDFLREENH…ELAVLVSGQK (200 aa)) form an interacts with BFSP2 and VIM region. Plectin repeat units follow at residues 1650–1684 (ENHL…WKMF) and 1699–1734 (VKGP…AAQY).

Belongs to the plakin or cytolinker family. As to quaternary structure, homodimer or a heterodimer with EVPL. Found in a complex composed of PPL (via C-terminal linker domain), BFSP1 and BFSP2 in the retinal lens. Within the complex interacts (via C-terminal linker domain) with BFSP2. Interacts with VIM. Binds to the PH domain of AKT1. Interacts with FCGR1A. May interact with PPHLN1. Expressed in the retinal lens (at protein level).

It localises to the cell junction. The protein resides in the desmosome. It is found in the cytoplasm. The protein localises to the cytoskeleton. Its subcellular location is the cell membrane. In terms of biological role, component of the cornified envelope of keratinocytes. May link the cornified envelope to desmosomes and intermediate filaments. May act as a localization signal in PKB/AKT-mediated signaling. The protein is Periplakin (Ppl) of Mus musculus (Mouse).